The chain runs to 761 residues: MTTTHILGYPRIGEKRELKFALEKYWRGEIDQAALKQVGSQIRQKNWALQKEAGLDFVTAGDFAWYDHVLTTTLLLGHVPKRHSHGFPDLDTLFRVGRGQSQNACGCGTGSAASDMTKWFNTNYHYIVPEFSSNDTFNVSWPQLFEEVNEALQAGHDVKPVLLGPISYLYLGKEVEEGFDRLTLLPRLLTAYQAILSKLAKQGVQWVQIDEPILALELEPRWQEAFKLAYQVIRGDVKLLLTTYFDSVLDTLDKIVELPVDGLHVDISAAPAQLETIVNRLPSDWVLSAGVINGRNVWRADLSAILARLQPVKTLLGERLWVASSCSLLHSPVDLDLEGDLSAETRSWFAFAKQKVTEVALLGRALEGDAAAILACDTYSQPIVARKSSHIVNKASVQTRINNITAALAERSAPYIERAHHQAEVLGLPFLPTTTIGSFPQTGEIRTERSAYRQGKLSEQEYVQALKGHIADAVKRQEALGLDVLVHGEAERNDMVEYFAENLAGFQTTQFGWVQSYGSRCVKPAIVVADIEREKPITVEWSTYAQSLTSKQMKGMLTGPVTILCWTFPREDISRQEIAQQLALALRDEVADLQDAGINIIQIDEPAIREGLPLKKRDHQTYLDWAVQAFKISAGSARPETQIHTHMCYSEFNEIIESVAALDADVITIETSRSNMELLKAFEEFNYPNEIGPGVYDIHSPNIPAQAWIEDLLRKAAEKIPAQRLWVNPDCGLKTRNWPEVEAALTNMVNAAKALRAEWQA.

5-methyltetrahydropteroyltri-L-glutamate-binding positions include 16 to 19 (RELK) and Lys-118. L-homocysteine-binding positions include 436–438 (IGS) and Glu-489. Residues 436–438 (IGS) and Glu-489 contribute to the L-methionine site. Residues 520–521 (RC) and Trp-566 each bind 5-methyltetrahydropteroyltri-L-glutamate. Asp-604 is an L-homocysteine binding site. Residue Asp-604 coordinates L-methionine. Glu-610 is a binding site for 5-methyltetrahydropteroyltri-L-glutamate. Residues His-646, Cys-648, and Glu-670 each contribute to the Zn(2+) site. His-699 serves as the catalytic Proton donor. Residue Cys-731 coordinates Zn(2+).

Belongs to the vitamin-B12 independent methionine synthase family. The cofactor is Zn(2+).

It carries out the reaction 5-methyltetrahydropteroyltri-L-glutamate + L-homocysteine = tetrahydropteroyltri-L-glutamate + L-methionine. Its pathway is amino-acid biosynthesis; L-methionine biosynthesis via de novo pathway; L-methionine from L-homocysteine (MetE route): step 1/1. Catalyzes the transfer of a methyl group from 5-methyltetrahydrofolate to homocysteine resulting in methionine formation. This Vibrio cholerae serotype O1 (strain ATCC 39315 / El Tor Inaba N16961) protein is 5-methyltetrahydropteroyltriglutamate--homocysteine methyltransferase.